A 680-amino-acid polypeptide reads, in one-letter code: Tumor protein 63 (680 aa).

A transcription activation region spans residues Met1–Met107. Polar residues predominate over residues Gln123–Asp157. The segment at Gln123–Tyr171 is disordered. Residues Asp170 to Gln362 mediate DNA binding. Residues Cys244, His247, Cys308, and Cys312 each coordinate Zn(2+). Residues Asp351 to Arg360 show a composition bias toward basic and acidic residues. 2 disordered regions span residues Asp351–Arg393 and Tyr435–Met472. The tract at residues Arg352 to Thr388 is interaction with HIPK2. Polar residues-rich tracts occupy residues Lys361–Gly371 and Arg379–Ser389. Positions Arg394–His443 are oligomerization. A compositionally biased stretch (low complexity) spans Gln437–Gln450. Residues Thr451 to Met472 are compositionally biased toward polar residues. In terms of domain architecture, SAM spans Pro541–Leu607. The transactivation inhibition stretch occupies residues Phe610–Glu680. Lys676 is covalently cross-linked (Glycyl lysine isopeptide (Lys-Gly) (interchain with G-Cter in SUMO)).

This sequence belongs to the p53 family. As to quaternary structure, binds DNA as a homotetramer. Isoform composition of the tetramer may determine transactivation activity. Isoforms Alpha and Gamma interact with HIPK2. Interacts with SSRP1, leading to stimulate coactivator activity. Isoform 1 and isoform 2 interact with WWP1. Interacts with PDS5A. Isoform 5 (via activation domain) interacts with NOC2L. It depends on Zn(2+) as a cofactor. Post-translationally, may be sumoylated. In terms of processing, ubiquitinated. Polyubiquitination involves WWP1 and leads to proteasomal degradation of this protein. In terms of tissue distribution, widely expressed, notably in heart, kidney, placenta, prostate, skeletal muscle, testis and thymus, although the precise isoform varies according to tissue type. Progenitor cell layers of skin, breast, eye and prostate express high levels of DeltaN-type isoforms. Isoform 10 is predominantly expressed in skin squamous cell carcinomas, but not in normal skin tissues.

It localises to the nucleus. In terms of biological role, acts as a sequence specific DNA binding transcriptional activator or repressor. The isoforms contain a varying set of transactivation and auto-regulating transactivation inhibiting domains thus showing an isoform specific activity. Isoform 2 activates RIPK4 transcription. May be required in conjunction with TP73/p73 for initiation of p53/TP53 dependent apoptosis in response to genotoxic insults and the presence of activated oncogenes. Involved in Notch signaling by probably inducing JAG1 and JAG2. Plays a role in the regulation of epithelial morphogenesis. The ratio of DeltaN-type and TA*-type isoforms may govern the maintenance of epithelial stem cell compartments and regulate the initiation of epithelial stratification from the undifferentiated embryonal ectoderm. Required for limb formation from the apical ectodermal ridge. Activates transcription of the p21 promoter. In Homo sapiens (Human), this protein is Tumor protein 63 (TP63).